The chain runs to 191 residues: COP9 signalosome complex subunit 8 (191 aa).

One can recognise a PCI domain in the interval 6–179 (MMAELDEKLL…VSLVPNEQQL (174 aa)).

Belongs to the CSN8 family. In terms of assembly, component of the CSN complex, probably composed of cops1, cops2, cops3, cops4, cops5, cops6, cops7, cops8 and cops9.

It is found in the cytoplasm. The protein localises to the nucleus. Functionally, component of the COP9 signalosome complex (CSN), a complex involved in various cellular and developmental processes. The CSN complex is an essential regulator of the ubiquitin (Ubl) conjugation pathway by mediating the deneddylation of the cullin subunits of E3 ligase complexes, leading to modify the Ubl ligase activity. The protein is COP9 signalosome complex subunit 8 (cops8) of Danio rerio (Zebrafish).